We begin with the raw amino-acid sequence, 247 residues long: tRNA pseudouridine synthase A 1 (247 aa).

Residue Asp53 is the Nucleophile of the active site. Tyr111 lines the substrate pocket.

This sequence belongs to the tRNA pseudouridine synthase TruA family. In terms of assembly, homodimer.

It catalyses the reaction uridine(38/39/40) in tRNA = pseudouridine(38/39/40) in tRNA. In terms of biological role, formation of pseudouridine at positions 38, 39 and 40 in the anticodon stem and loop of transfer RNAs. The chain is tRNA pseudouridine synthase A 1 from Bacillus cereus (strain ATCC 14579 / DSM 31 / CCUG 7414 / JCM 2152 / NBRC 15305 / NCIMB 9373 / NCTC 2599 / NRRL B-3711).